Reading from the N-terminus, the 389-residue chain is uncharacterized protein (389 aa).

Belongs to the mimivirus L17x/L18x family.

This is an uncharacterized protein from Acanthamoeba polyphaga mimivirus (APMV).